A 529-amino-acid chain; its full sequence is Bifunctional purine biosynthesis protein PurH (529 aa).

The region spanning 1 to 148 (MNNVRPIRRA…KNHKDTTIVV (148 aa)) is the MGS-like domain.

This sequence belongs to the PurH family.

It catalyses the reaction (6R)-10-formyltetrahydrofolate + 5-amino-1-(5-phospho-beta-D-ribosyl)imidazole-4-carboxamide = 5-formamido-1-(5-phospho-D-ribosyl)imidazole-4-carboxamide + (6S)-5,6,7,8-tetrahydrofolate. It carries out the reaction IMP + H2O = 5-formamido-1-(5-phospho-D-ribosyl)imidazole-4-carboxamide. The protein operates within purine metabolism; IMP biosynthesis via de novo pathway; 5-formamido-1-(5-phospho-D-ribosyl)imidazole-4-carboxamide from 5-amino-1-(5-phospho-D-ribosyl)imidazole-4-carboxamide (10-formyl THF route): step 1/1. It participates in purine metabolism; IMP biosynthesis via de novo pathway; IMP from 5-formamido-1-(5-phospho-D-ribosyl)imidazole-4-carboxamide: step 1/1. The protein is Bifunctional purine biosynthesis protein PurH of Shewanella frigidimarina (strain NCIMB 400).